Reading from the N-terminus, the 362-residue chain is H-2 class I histocompatibility antigen, L-D alpha chain (362 aa).

Positions 1–24 are cleaved as a signal peptide; it reads MGAMAPRTLLLLLAAALAPTQTRA. Residues 25-114 are alpha-1; sequence GPHSMRYFET…LLGYYNQSAG (90 aa). Residues 25-309 lie on the Extracellular side of the membrane; it reads GPHSMRYFET…PPPSTDSYMV (285 aa). The N-linked (GlcNAc...) asparagine glycan is linked to Asn110. An alpha-2 region spans residues 115–206; the sequence is GTHTLQWMYG…KNGNATLLRT (92 aa). Cys125 and Cys188 are disulfide-bonded. Residues Asn200 and Asn280 are each glycosylated (N-linked (GlcNAc...) asparagine). The segment at 207–298 is alpha-3; sequence DSPKAHVTHH…GLPEPLTLRW (92 aa). The 89-residue stretch at 209-297 folds into the Ig-like C1-type domain; the sequence is PKAHVTHHPR…EGLPEPLTLR (89 aa). A disulfide bridge links Cys227 with Cys283. Residues 299–309 are connecting peptide; it reads EPPPSTDSYMV. The helical transmembrane segment at 310–331 threads the bilayer; the sequence is IVAVLGVLGAMAIIGAVVAFVM. The Cytoplasmic segment spans residues 332-362; that stretch reads KRRRNTGGKGGDYALAPGSQSSEMSLRDCKA. A disordered region spans residues 340 to 362; it reads KGGDYALAPGSQSSEMSLRDCKA. A phosphoserine mark is found at Ser353 and Ser356.

This sequence belongs to the MHC class I family. As to quaternary structure, heterodimer of an alpha chain and a beta chain (beta-2-microglobulin).

The protein resides in the membrane. Functionally, involved in the presentation of foreign antigens to the immune system. The polypeptide is H-2 class I histocompatibility antigen, L-D alpha chain (H2-L) (Mus musculus (Mouse)).